Consider the following 90-residue polypeptide: Succinate dehydrogenase subunit 7, mitochondrial (90 aa).

The transit peptide at 1-41 (MAQPAFLSALRSRLRSPQPQAPALPHLQPPRRGFHVELGAR) directs the protein to the mitochondrion.

Component of complex II composed of eight subunits in plants: four classical SDH subunits SDH1, SDH2, SDH3 and SDH4 (a flavoprotein (FP), an iron-sulfur protein (IP), and a cytochrome b composed of a large and a small subunit.), as well as four subunits unknown in mitochondria from bacteria and heterotrophic eukaryotes.

Its subcellular location is the mitochondrion inner membrane. It functions in the pathway carbohydrate metabolism; tricarboxylic acid cycle. This chain is Succinate dehydrogenase subunit 7, mitochondrial, found in Oryza sativa subsp. japonica (Rice).